The chain runs to 405 residues: 4-hydroxy-3-methylbut-2-en-1-yl diphosphate synthase (flavodoxin) (405 aa).

Cysteine 297, cysteine 300, cysteine 343, and glutamate 350 together coordinate [4Fe-4S] cluster.

It belongs to the IspG family. It depends on [4Fe-4S] cluster as a cofactor.

The enzyme catalyses (2E)-4-hydroxy-3-methylbut-2-enyl diphosphate + oxidized [flavodoxin] + H2O + 2 H(+) = 2-C-methyl-D-erythritol 2,4-cyclic diphosphate + reduced [flavodoxin]. The protein operates within isoprenoid biosynthesis; isopentenyl diphosphate biosynthesis via DXP pathway; isopentenyl diphosphate from 1-deoxy-D-xylulose 5-phosphate: step 5/6. Converts 2C-methyl-D-erythritol 2,4-cyclodiphosphate (ME-2,4cPP) into 1-hydroxy-2-methyl-2-(E)-butenyl 4-diphosphate. This is 4-hydroxy-3-methylbut-2-en-1-yl diphosphate synthase (flavodoxin) from Francisella tularensis subsp. novicida (strain U112).